We begin with the raw amino-acid sequence, 172 residues long: Large ribosomal subunit protein bL17 (172 aa).

The tract at residues 123-172 is disordered; that stretch reads ATGSKRAQTEEAASQEPAAEAGKQPAEGATSVQTAEAADASQAEGEAEEK. Residues 132–143 are compositionally biased toward low complexity; it reads EEAASQEPAAEA.

Belongs to the bacterial ribosomal protein bL17 family. In terms of assembly, part of the 50S ribosomal subunit. Contacts protein L32.

The protein is Large ribosomal subunit protein bL17 of Thermobifida fusca (strain YX).